Here is a 330-residue protein sequence, read N- to C-terminus: Aspartate--ammonia ligase (330 aa).

This sequence belongs to the class-II aminoacyl-tRNA synthetase family. AsnA subfamily.

The protein localises to the cytoplasm. The catalysed reaction is L-aspartate + NH4(+) + ATP = L-asparagine + AMP + diphosphate + H(+). It participates in amino-acid biosynthesis; L-asparagine biosynthesis; L-asparagine from L-aspartate (ammonia route): step 1/1. This Haemophilus influenzae (strain PittEE) protein is Aspartate--ammonia ligase.